Here is a 445-residue protein sequence, read N- to C-terminus: Probable D-serine dehydratase (445 aa).

Lys-111 carries the N6-(pyridoxal phosphate)lysine modification.

Belongs to the serine/threonine dehydratase family. DsdA subfamily. Requires pyridoxal 5'-phosphate as cofactor.

The enzyme catalyses D-serine = pyruvate + NH4(+). In Burkholderia pseudomallei (strain 1106a), this protein is Probable D-serine dehydratase.